The primary structure comprises 390 residues: 5-hydroxytryptamine receptor 1B (390 aa).

Residues 1–46 (MEEPGAQCAPPLAAGSQIAVPQANLSAAHSHNCSAEGYIYQDSIAL) lie on the Extracellular side of the membrane. 2 N-linked (GlcNAc...) asparagine glycosylation sites follow: Asn-24 and Asn-32. Residues 47-72 (PWKVLLVLLLALFTLATTLSNAFVVA) form a helical membrane-spanning segment. Residues 73–86 (TVYRTRKLHTPANY) lie on the Cytoplasmic side of the membrane. Residues 87–111 (LIASLAVTDLLVSILVMPISTMYTV) form a helical membrane-spanning segment. Topologically, residues 112–119 (TGRWTLGQ) are extracellular. A helical membrane pass occupies residues 120–145 (VVCDLWLSSDITCCTASIMHLCVIAL). Cysteines 122 and 199 form a disulfide. Asp-129 and Thr-134 together coordinate ergotamine. Positions 146 to 148 (DRY) match the DRY motif; important for ligand-induced conformation changes and signaling motif. Residues 146 to 165 (DRYWAITDAVEYSAKRTPKR) are Cytoplasmic-facing. A helical transmembrane segment spans residues 166–184 (AAIMIRLVWVFSICISLPP). At 185 to 205 (FFWRQAKAEEEVSECLVNTDH) the chain is on the extracellular side. Residue Val-201 coordinates ergotamine. Residues 206–229 (VLYTVYSTVGAFYLPTLLLIALYG) traverse the membrane as a helical segment. Over 230–315 (RIYVEARSRI…AARERKATKT (86 aa)) the chain is Cytoplasmic. A compositionally biased stretch (polar residues) spans 260-272 (SPGSTTSVTSINS). Residues 260 to 282 (SPGSTTSVTSINSRAPDVPSESG) are disordered. A helical membrane pass occupies residues 316–337 (LGIILGVFIVCWLPFFIISLVM). Over 338–347 (PICKDACWFH) the chain is Extracellular. A helical transmembrane segment spans residues 348 to 370 (QAIFDFFTWLGYVNSLINPIIYT). An NPxxY motif; important for ligand-induced conformation changes and signaling motif is present at residues 365–369 (NPIIY). Topologically, residues 371 to 390 (MSNEDFKQAFHKLIRFKCTS) are cytoplasmic. The S-palmitoyl cysteine moiety is linked to residue Cys-388.

Belongs to the G-protein coupled receptor 1 family. In terms of assembly, homodimer. Heterodimer with HTR1D. In terms of processing, phosphorylated. Desensitization of the receptor may be mediated by its phosphorylation. Post-translationally, palmitoylated.

The protein localises to the cell membrane. In terms of biological role, G-protein coupled receptor for 5-hydroxytryptamine (serotonin). Also functions as a receptor for ergot alkaloid derivatives, various anxiolytic and antidepressant drugs and other psychoactive substances, such as lysergic acid diethylamide (LSD). Ligand binding causes a conformation change that triggers signaling via guanine nucleotide-binding proteins (G proteins) and modulates the activity of downstream effectors, such as adenylate cyclase. HTR1B is coupled to G(i)/G(o) G alpha proteins and mediates inhibitory neurotransmission by inhibiting adenylate cyclase activity. Arrestin family members inhibit signaling via G proteins and mediate activation of alternative signaling pathways. Regulates the release of 5-hydroxytryptamine, dopamine and acetylcholine in the brain, and thereby affects neural activity, nociceptive processing, pain perception, mood and behavior. Besides, plays a role in vasoconstriction of cerebral arteries. The protein is 5-hydroxytryptamine receptor 1B (HTR1B) of Oryctolagus cuniculus (Rabbit).